The following is a 241-amino-acid chain: L-aspartate dehydrogenase (241 aa).

NAD(+) contacts are provided by residues 10-11 (NI), Asp-28, 56-57 (AS), 63-64 (EY), 78-79 (IS), Ala-109, and Asn-164. Residue His-193 is part of the active site.

Belongs to the L-aspartate dehydrogenase family. As to quaternary structure, homodimer.

It carries out the reaction L-aspartate + NADP(+) + H2O = oxaloacetate + NH4(+) + NADPH + H(+). The catalysed reaction is L-aspartate + NAD(+) + H2O = oxaloacetate + NH4(+) + NADH + H(+). It participates in cofactor biosynthesis; NAD(+) biosynthesis; iminoaspartate from L-aspartate (dehydrogenase route): step 1/1. Competitively inhibited by L-malate and NH(4)(+). Functionally, specifically catalyzes the NAD or NADP-dependent dehydrogenation of L-aspartate to iminoaspartate. Does not show aspartate oxidase activity. Is also able to catalyze the reverse reaction, i.e. the reductive amination of oxaloacetate. This chain is L-aspartate dehydrogenase, found in Thermotoga maritima (strain ATCC 43589 / DSM 3109 / JCM 10099 / NBRC 100826 / MSB8).